Consider the following 439-residue polypeptide: Proline--tRNA ligase (439 aa).

The protein belongs to the class-II aminoacyl-tRNA synthetase family. ProS type 2 subfamily. Homodimer.

The protein resides in the cytoplasm. The catalysed reaction is tRNA(Pro) + L-proline + ATP = L-prolyl-tRNA(Pro) + AMP + diphosphate. In terms of biological role, catalyzes the attachment of proline to tRNA(Pro) in a two-step reaction: proline is first activated by ATP to form Pro-AMP and then transferred to the acceptor end of tRNA(Pro). This chain is Proline--tRNA ligase, found in Rhodopseudomonas palustris (strain BisB18).